We begin with the raw amino-acid sequence, 369 residues long: Probable dual-specificity RNA methyltransferase RlmN (369 aa).

Glutamate 108 (proton acceptor) is an active-site residue. Residues 114-351 (YPDRATLCIS…LAQGVSCTVR (238 aa)) form the Radical SAM core domain. Cysteines 121 and 362 form a disulfide. Residues cysteine 128, cysteine 132, and cysteine 135 each coordinate [4Fe-4S] cluster. S-adenosyl-L-methionine contacts are provided by residues 183–184 (GE), serine 217, 240–242 (SLH), and asparagine 319. The active-site S-methylcysteine intermediate is cysteine 362.

It belongs to the radical SAM superfamily. RlmN family. Requires [4Fe-4S] cluster as cofactor.

It is found in the cytoplasm. The enzyme catalyses adenosine(2503) in 23S rRNA + 2 reduced [2Fe-2S]-[ferredoxin] + 2 S-adenosyl-L-methionine = 2-methyladenosine(2503) in 23S rRNA + 5'-deoxyadenosine + L-methionine + 2 oxidized [2Fe-2S]-[ferredoxin] + S-adenosyl-L-homocysteine. It carries out the reaction adenosine(37) in tRNA + 2 reduced [2Fe-2S]-[ferredoxin] + 2 S-adenosyl-L-methionine = 2-methyladenosine(37) in tRNA + 5'-deoxyadenosine + L-methionine + 2 oxidized [2Fe-2S]-[ferredoxin] + S-adenosyl-L-homocysteine. In terms of biological role, specifically methylates position 2 of adenine 2503 in 23S rRNA and position 2 of adenine 37 in tRNAs. This is Probable dual-specificity RNA methyltransferase RlmN from Rhodococcus opacus (strain B4).